Here is a 287-residue protein sequence, read N- to C-terminus: Large ribosomal subunit protein uL2 (287 aa).

The segment at R221–S287 is disordered. Positions K258–S287 are enriched in basic residues.

Belongs to the universal ribosomal protein uL2 family. In terms of assembly, part of the 50S ribosomal subunit. Forms a bridge to the 30S subunit in the 70S ribosome.

Functionally, one of the primary rRNA binding proteins. Required for association of the 30S and 50S subunits to form the 70S ribosome, for tRNA binding and peptide bond formation. It has been suggested to have peptidyltransferase activity; this is somewhat controversial. Makes several contacts with the 16S rRNA in the 70S ribosome. The polypeptide is Large ribosomal subunit protein uL2 (Synechococcus sp. (strain CC9311)).